The chain runs to 320 residues: Serpentine receptor class gamma-15 (320 aa).

Helical transmembrane passes span 29 to 49 (TISY…TILV), 57 to 77 (GSSF…IVFI), 85 to 105 (FLYV…SSLI), 151 to 171 (VSLV…IISP), 197 to 217 (LFQS…TSVT), 240 to 260 (IYIS…AFCT), and 268 to 288 (LFTA…VILF).

The protein belongs to the nematode receptor-like protein srg family.

It is found in the membrane. The chain is Serpentine receptor class gamma-15 (srg-15) from Caenorhabditis elegans.